A 130-amino-acid polypeptide reads, in one-letter code: Small ribosomal subunit protein uS11c (130 aa).

Belongs to the universal ribosomal protein uS11 family. As to quaternary structure, part of the 30S ribosomal subunit.

Its subcellular location is the plastid. It is found in the chloroplast. This chain is Small ribosomal subunit protein uS11c, found in Mesostigma viride (Green alga).